We begin with the raw amino-acid sequence, 526 residues long: Secreted triacylglycerol lipase LIP4 (526 aa).

A signal peptide spans 1–26; that stretch reads MVRLSYVRFGVAWCIAIIIVSGFSNA. Asn186 carries N-linked (GlcNAc...) asparagine glycosylation. The Nucleophile role is filled by Ser195. An N-linked (GlcNAc...) asparagine glycan is attached at Asn228. Catalysis depends on residues Asp342 and His376. N-linked (GlcNAc...) asparagine glycosylation occurs at Asn377. A disordered region spans residues 412 to 526; it reads TGPSASSSAG…TMPAPPLMER (115 aa). Low complexity-rich tracts occupy residues 413 to 423 and 430 to 457; these read GPSASSSAGGP and TGGH…HAPA. Asn462 carries an N-linked (GlcNAc...) asparagine glycan. Positions 480-490 are enriched in low complexity; the sequence is PSTGATSPAPS. Positions 516–526 are enriched in pro residues; that stretch reads RTMPAPPLMER.

Belongs to the AB hydrolase superfamily. Lipase family. Class Lip subfamily.

It localises to the secreted. The enzyme catalyses a triacylglycerol + H2O = a diacylglycerol + a fatty acid + H(+). It carries out the reaction a monoacylglycerol + H2O = glycerol + a fatty acid + H(+). The catalysed reaction is a diacylglycerol + H2O = a monoacylglycerol + a fatty acid + H(+). In terms of biological role, secreted lipase that hydrolyzes acylglycerol lipids such as triacylglycerols and consequently releases free fatty acid. Can hydrolyze 4-nitrophenyl palmitate to release 4-nitrophenol and palmitoic acid. Due to an absence of fatty acid synthase genes in Malassezia species, secretory lipases are essential for the yeast to generate free fatty acids from degradation of sebum and assimilate them as lipid sources for growth. Plays important roles not only in lipid metabolism but also in the immune response of host cells and pathogenesis. This chain is Secreted triacylglycerol lipase LIP4, found in Malassezia furfur (Pityriasis versicolor infection agent).